Here is a 435-residue protein sequence, read N- to C-terminus: MKKFHIVKLGCPKNDADMEIFKGLLQSKGYKYESNPQLANYIFIDTCGFIEEAKKESIETIFEYVSLKDNNKNLKVIPIGCLTQRYFDDILKDIPEIDGLYGVLSPKTIVEKIENGEYFFKRDIPETLYDCKIRAIPDSHYAYVKIGDGCSRNCAFCSIPTFKGKPKSRSIEEINEEVEFLVSKGVKEIILVSQDNTLYGIDNYQKQALPDLLDKLNNIKGKFWIRVMYLHPDFLSEEIIESIHRNEKVLNYFDVPIQHISDKILQSMGRHKKRNELIKLFEKIRKEPSAIRTTLMVGFPGEKAEDFEELVDFVKEIKFERMGSFIFSKEENTKSFTLPEQIDEQIKKQRQNELMTVQSEISKNIMEKYIGETLEVLLEEKEDNVYVGRSYLDAPEIDGNVYIKNFGDKELTFGNFVKVTITGSYEYDLEGEIVE.

Positions 2–118 constitute an MTTase N-terminal domain; that stretch reads KKFHIVKLGC…IVEKIENGEY (117 aa). [4Fe-4S] cluster is bound by residues C11, C47, C81, C150, C154, and C157. The Radical SAM core domain occupies 136 to 364; the sequence is IPDSHYAYVK…MTVQSEISKN (229 aa). The TRAM domain maps to 367-435; that stretch reads EKYIGETLEV…EYDLEGEIVE (69 aa).

It belongs to the methylthiotransferase family. RimO subfamily. [4Fe-4S] cluster is required as a cofactor.

It localises to the cytoplasm. It catalyses the reaction L-aspartate(89)-[ribosomal protein uS12]-hydrogen + (sulfur carrier)-SH + AH2 + 2 S-adenosyl-L-methionine = 3-methylsulfanyl-L-aspartate(89)-[ribosomal protein uS12]-hydrogen + (sulfur carrier)-H + 5'-deoxyadenosine + L-methionine + A + S-adenosyl-L-homocysteine + 2 H(+). Its function is as follows. Catalyzes the methylthiolation of an aspartic acid residue of ribosomal protein uS12. The protein is Ribosomal protein uS12 methylthiotransferase RimO of Petrotoga mobilis (strain DSM 10674 / SJ95).